The chain runs to 395 residues: Argininosuccinate synthase (395 aa).

8 to 16 (AYSGGLDTS) is an ATP binding site. L-citrulline is bound at residue tyrosine 86. ATP is bound at residue glycine 116. 3 residues coordinate L-aspartate: threonine 118, asparagine 122, and aspartate 123. Asparagine 122 contributes to the L-citrulline binding site. The L-citrulline site is built by arginine 126, serine 173, serine 182, glutamate 257, and tyrosine 269.

This sequence belongs to the argininosuccinate synthase family. Type 1 subfamily. As to quaternary structure, homotetramer.

The protein localises to the cytoplasm. The catalysed reaction is L-citrulline + L-aspartate + ATP = 2-(N(omega)-L-arginino)succinate + AMP + diphosphate + H(+). Its pathway is amino-acid biosynthesis; L-arginine biosynthesis; L-arginine from L-ornithine and carbamoyl phosphate: step 2/3. The sequence is that of Argininosuccinate synthase from Methanocaldococcus jannaschii (strain ATCC 43067 / DSM 2661 / JAL-1 / JCM 10045 / NBRC 100440) (Methanococcus jannaschii).